Here is a 441-residue protein sequence, read N- to C-terminus: D-aminoacyl-tRNA deacylase (441 aa).

This sequence belongs to the DtdA deacylase family. In terms of assembly, monomer. Requires Zn(2+) as cofactor.

The catalysed reaction is a D-aminoacyl-tRNA + H2O = a tRNA + a D-alpha-amino acid + H(+). It catalyses the reaction glycyl-tRNA(Ala) + H2O = tRNA(Ala) + glycine + H(+). D-aminoacyl-tRNA deacylase with broad substrate specificity. By recycling D-aminoacyl-tRNA to D-amino acids and free tRNA molecules, this enzyme counteracts the toxicity associated with the formation of D-aminoacyl-tRNA entities in vivo. This is D-aminoacyl-tRNA deacylase from Natronomonas pharaonis (strain ATCC 35678 / DSM 2160 / CIP 103997 / JCM 8858 / NBRC 14720 / NCIMB 2260 / Gabara) (Halobacterium pharaonis).